The following is a 335-amino-acid chain: Biotin synthase (335 aa).

The Radical SAM core domain maps to 46-274; sequence YDIQLASLFS…ESKIRLSAGR (229 aa). [4Fe-4S] cluster contacts are provided by C61, C65, and C68. Positions 105, 137, 197, and 269 each coordinate [2Fe-2S] cluster.

It belongs to the radical SAM superfamily. Biotin synthase family. Homodimer. It depends on [4Fe-4S] cluster as a cofactor. [2Fe-2S] cluster serves as cofactor.

The catalysed reaction is (4R,5S)-dethiobiotin + (sulfur carrier)-SH + 2 reduced [2Fe-2S]-[ferredoxin] + 2 S-adenosyl-L-methionine = (sulfur carrier)-H + biotin + 2 5'-deoxyadenosine + 2 L-methionine + 2 oxidized [2Fe-2S]-[ferredoxin]. It participates in cofactor biosynthesis; biotin biosynthesis; biotin from 7,8-diaminononanoate: step 2/2. Its function is as follows. Catalyzes the conversion of dethiobiotin (DTB) to biotin by the insertion of a sulfur atom into dethiobiotin via a radical-based mechanism. This Prochlorococcus marinus (strain MIT 9301) protein is Biotin synthase.